A 143-amino-acid chain; its full sequence is Large ribosomal subunit protein uL11 (143 aa).

Belongs to the universal ribosomal protein uL11 family. Part of the ribosomal stalk of the 50S ribosomal subunit. Interacts with L10 and the large rRNA to form the base of the stalk. L10 forms an elongated spine to which L12 dimers bind in a sequential fashion forming a multimeric L10(L12)X complex. Post-translationally, one or more lysine residues are methylated.

Its function is as follows. Forms part of the ribosomal stalk which helps the ribosome interact with GTP-bound translation factors. This chain is Large ribosomal subunit protein uL11, found in Cellvibrio japonicus (strain Ueda107) (Pseudomonas fluorescens subsp. cellulosa).